Reading from the N-terminus, the 263-residue chain is Putative methyltransferase DDB_G0268948 (263 aa).

This sequence belongs to the methyltransferase superfamily.

The polypeptide is Putative methyltransferase DDB_G0268948 (Dictyostelium discoideum (Social amoeba)).